The following is a 115-amino-acid chain: MSNIIKQLEQEQMKQDVPSFRPGDTVEVKVWVVEGSKKRLQAFEGVVIAIRNRGLHSAFTVRKISNGEGVERVFQTHSPVVDSIAVKRRGAVRKAKLYYLRERTGKSARIKERLN.

Belongs to the bacterial ribosomal protein bL19 family.

This protein is located at the 30S-50S ribosomal subunit interface and may play a role in the structure and function of the aminoacyl-tRNA binding site. This Klebsiella pneumoniae (strain 342) protein is Large ribosomal subunit protein bL19.